A 274-amino-acid chain; its full sequence is Adenosylcobinamide-GDP ribazoletransferase (274 aa).

7 helical membrane passes run 46–66 (VMAS…AIAF), 69–89 (TSLG…WELF), 117–137 (IIAD…SILI), 151–173 (WWMV…HSRL), 192–212 (HTII…PLAM), 216–236 (ELIT…LVEI), and 253–273 (FIMH…VGIV).

The protein belongs to the CobS family. Mg(2+) serves as cofactor.

Its subcellular location is the cell membrane. It catalyses the reaction alpha-ribazole + adenosylcob(III)inamide-GDP = adenosylcob(III)alamin + GMP + H(+). It carries out the reaction alpha-ribazole 5'-phosphate + adenosylcob(III)inamide-GDP = adenosylcob(III)alamin 5'-phosphate + GMP + H(+). It participates in cofactor biosynthesis; adenosylcobalamin biosynthesis; adenosylcobalamin from cob(II)yrinate a,c-diamide: step 7/7. Its function is as follows. Joins adenosylcobinamide-GDP and alpha-ribazole to generate adenosylcobalamin (Ado-cobalamin). Also synthesizes adenosylcobalamin 5'-phosphate from adenosylcobinamide-GDP and alpha-ribazole 5'-phosphate. The sequence is that of Adenosylcobinamide-GDP ribazoletransferase from Corynebacterium diphtheriae (strain ATCC 700971 / NCTC 13129 / Biotype gravis).